The primary structure comprises 480 residues: Docking protein 1 (480 aa).

M1 bears the N-acetylmethionine mark. The PH domain maps to 3 to 119 (GALMEGPLFL…WVQILCRTAF (117 aa)). S48 is subject to Phosphoserine. The 109-residue stretch at 151–259 (EGSQFWVTSQ…QQQKAQGKVG (109 aa)) folds into the IRS-type PTB domain. Positions 253-262 (KAQGKVGQGQ) are enriched in low complexity. A disordered region spans residues 253–328 (KAQGKVGQGQ…GSTPAGAGEG (76 aa)). The segment covering 265-276 (TRTDSHDGETEG) has biased composition (basic and acidic residues). Phosphoserine is present on residues S269 and S290. Y295, Y336, and Y340 each carry phosphotyrosine. Y361 carries the post-translational modification Phosphotyrosine; by INSR. Position 376 is a phosphotyrosine (Y376). Y397 carries the post-translational modification Phosphotyrosine; by INSR. The disordered stretch occupies residues 398 to 480 (ELPYNPATDD…RVGVKSEGST (83 aa)). Position 408 is a phosphotyrosine (Y408). A compositionally biased stretch (pro residues) spans 410–423 (VPPPRSSKPTPAPK). The residue at position 415 (S415) is a Phosphoserine. Residues 432–445 (SGTTAGSGSKGSDT) show a composition bias toward low complexity. The span at 446–455 (ALYSQVQKSG) shows a compositional bias: polar residues. At Y448 the chain carries Phosphotyrosine.

Belongs to the DOK family. Type A subfamily. In terms of assembly, interacts with RasGAP and INPP5D/SHIP1. Interacts directly with phosphorylated ITGB3. Interacts with SRMS (via the SH2 and SH3 domains). In terms of processing, constitutively tyrosine-phosphorylated. Phosphorylated by TEC. Phosphorylated by LYN. Phosphorylated on tyrosine residues by the insulin receptor kinase. Results in the negative regulation of the insulin signaling pathway. Phosphorylated on tyrosine residues by SRMS.

The protein resides in the cytoplasm. It localises to the nucleus. In terms of biological role, DOK proteins are enzymatically inert adaptor or scaffolding proteins. They provide a docking platform for the assembly of multimolecular signaling complexes. DOK1 appears to be a negative regulator of the insulin signaling pathway. Modulates integrin activation by competing with talin for the same binding site on ITGB3. The protein is Docking protein 1 (Dok1) of Rattus norvegicus (Rat).